The primary structure comprises 770 residues: Probable methyltransferase PMT25 (770 aa).

At 1 to 17 the chain is on the cytoplasmic side; the sequence is MAMGKYSRVDGKKSSSY. A helical; Signal-anchor for type II membrane protein transmembrane segment spans residues 18–38; the sequence is GLTITIVLLLSLCLVGTWMFM. Topologically, residues 39–770 are lumenal; sequence SSWSAPADSA…ETETIKSAIA (732 aa). Residues 44 to 238 are disordered; that stretch reads PADSAGYSST…SSISKDQSSY (195 aa). The span at 55–79 shows a compositional bias: basic and acidic residues; the sequence is TAKDVSKNDLRKEEGDRDPKNFSDE. Residues Asn75 and Asn107 are each glycosylated (N-linked (GlcNAc...) asparagine). The span at 92–109 shows a compositional bias: polar residues; it reads QVKTDSENSAEGNQVNES. Composition is skewed to basic and acidic residues over residues 110–124 and 131–177; these read SGEK…KESD and DGEK…KAEE. N-linked (GlcNAc...) asparagine glycans are attached at residues Asn163 and Asn178. 2 stretches are compositionally biased toward polar residues: residues 205–220 and 227–238; these read ESST…LVES and QQSSISKDQSSY. N-linked (GlcNAc...) asparagine glycosylation is found at Asn244 and Asn363.

This sequence belongs to the methyltransferase superfamily.

Its subcellular location is the golgi apparatus membrane. The polypeptide is Probable methyltransferase PMT25 (Arabidopsis thaliana (Mouse-ear cress)).